The chain runs to 1828 residues: InaD-like protein (1828 aa).

In terms of domain architecture, L27 spans 5 to 65 (PAPDKLQVLQ…SIKQLKGQLS (61 aa)). 3 PDZ domains span residues 134–221 (YIDI…AREP), 248–328 (DVEL…ARDP), and 365–453 (GVEL…VRRK). Serine 459 and serine 522 each carry phosphoserine. In terms of domain architecture, PDZ 4 spans 553–639 (DAELQKYSKL…PFTLVCCRRL (87 aa)). A Phosphoserine modification is found at serine 645. 2 PDZ domains span residues 686–758 (IVEL…EVLK) and 1070–1162 (IVEI…QSLS). Residues 1168 to 1220 (IPSVHNKANKIANNQDQNTEEKKEKRQGTPPPPMKLPPPYKAPSDDSDENEEE) are disordered. Residues 1196–1208 (TPPPPMKLPPPYK) are compositionally biased toward pro residues. Serine 1211 bears the Phosphoserine mark. Residues 1241–1324 (IIELEKDKNG…KVKLVFIRNE (84 aa)) form the PDZ 7 domain. A disordered region spans residues 1333–1362 (APFPVPSSSPSSLEDQSGTEPVSSEEDGSL). The span at 1345–1354 (LEDQSGTEPV) shows a compositional bias: polar residues. 2 PDZ domains span residues 1464-1547 (IIEI…YRDE) and 1560-1642 (PVDL…GRLR). Phosphothreonine is present on threonine 1535. Over residues 1645–1668 (SWTSSRKTSQNSQGSQHSTHSSFH) the composition is skewed to polar residues. The segment at 1645 to 1669 (SWTSSRKTSQNSQGSQHSTHSSFHP) is disordered. One can recognise a PDZ 10 domain in the interval 1703 to 1789 (TVEIIRELSD…RIILQVVADT (87 aa)). The interval 1805-1828 (YHLGSPTAEHHPEDTEEPLQMTAG) is disordered.

As to quaternary structure, forms a ternary complex with PALS1 and CRB1. Component of a complex whose core is composed of ARHGAP17, AMOT, PALS1, INADL/PATJ and PARD3/PAR3. Forms a heterotrimeric complex composed of MMP5, LIN7B and PATJ; the N-terminal L27 domain of PALS1 interacts with the L27 domain of PATJ and the C-terminal L27 domain of PALS1 interacts with the L27 domain of LIN7B. Component of a complex composed of CRB3, PALS1 and PATJ. As part of the Crumbs complex; interacts with WWP1, the interaction is enhanced by AMOTL2 and facilitates WWP1 localization to the plasma membrane. The Crumbs complex promotes monoubiquitination of AMOTL2 by WWP1, which activates the Hippo signaling pathway. Interacts (via N-terminus) with PALS1/PALS (via PDZ domain). Interacts with TJP3/ZO-3 and CLDN1/claudin-1. Interacts with ASIC3, KCNJ10, KCNJ15, GRIN2A, GRIN2B, GRIN2C, GRIN2D, NLGN2, and HTR2A. Interacts with MPP7. Directly interacts with HTR4. Interacts (via PDZ domain 8) with WWC1 (via the ADDV motif). Interacts with SLC6A4. Interacts (via C-terminus) with ARHGEF18. Interacts with NPHP1. Interacts with PARD3/PAR3. Interacts (via PDZ1-6 domains) with TJP1/ZO1; the interaction is required for attachment and extension of TJP1/ZO1 condensates along the apical cell interface.

Its subcellular location is the cell junction. It is found in the tight junction. The protein localises to the apical cell membrane. The protein resides in the cytoplasm. It localises to the perinuclear region. Its function is as follows. Scaffolding protein that facilitates the localization of proteins to the cell membrane. Required for the correct formation of tight junctions and epithelial apico-basal polarity. Acts (via its L27 domain) as an apical connector and elongation factor for multistranded TJP1/ZO1 condensates that form a tight junction belt, thereby required for the formation of the tight junction-mediated cell barrier. Positively regulates epithelial cell microtubule elongation and cell migration, possibly via facilitating localization of PRKCI/aPKC and PAR3D/PAR3 at the leading edge of migrating cells. Plays a role in the correct reorientation of the microtubule-organizing center during epithelial migration. May regulate the surface expression and/or function of ASIC3 in sensory neurons. May recruit ARHGEF18 to apical cell-cell boundaries. The protein is InaD-like protein of Canis lupus familiaris (Dog).